Consider the following 142-residue polypeptide: Small ribosomal subunit protein uS12 (142 aa).

This sequence belongs to the universal ribosomal protein uS12 family. As to quaternary structure, part of the 30S ribosomal subunit.

Functionally, with S4 and S5 plays an important role in translational accuracy. Located at the interface of the 30S and 50S subunits. This chain is Small ribosomal subunit protein uS12, found in Methanocorpusculum labreanum (strain ATCC 43576 / DSM 4855 / Z).